The chain runs to 652 residues: 2-oxoglutarate carboxylase large subunit (652 aa).

The Pyruvate carboxyltransferase domain occupies 26–288 (ILITDLTPRD…DTGIDMKKLD (263 aa)). Substrate contacts are provided by residues 34–38 (RDGQQ) and Arg-105. Asp-35 contacts a divalent metal cation. 3 residues coordinate a divalent metal cation: Lys-196, His-227, and His-229. Lys-196 is subject to N6-carboxylysine. Thr-362 contacts substrate. The Biotinyl-binding domain maps to 563–643 (AEEKGIPKAT…TPDDALLRIK (81 aa)). Position 609 is an N6-biotinyllysine (Lys-609).

Heterohexadecamer of 8 large subunits and 8 small subunits. Mg(2+) is required as a cofactor. Mn(2+) serves as cofactor. It depends on Co(2+) as a cofactor. In terms of processing, biotinylated.

It catalyses the reaction hydrogencarbonate + 2-oxoglutarate + ATP = (S)-oxalosuccinate + ADP + phosphate + H(+). The chain is 2-oxoglutarate carboxylase large subunit from Hydrogenobacter thermophilus (strain DSM 6534 / IAM 12695 / TK-6).